The primary structure comprises 479 residues: MSQGEIVQVIGPVVDVKFSIGKDLPDINNALKVIKSDDDSIILEVILEQGDGVLRCIAMESTDGLRRGMKVEDTGSSISVPVGPDTLGRVFNVLGQPIDGGPEFPADHPRSGIHKEAPKYDELTTSREILETGIKVIDLLEPYLRGGKVGLFGGAGVGKTTIIQELIHNIAQEHNGISVFTGVGERTREGNDLYFEMKASGVLDKTAMVFGQMNEPPGARMRVALTGLTIAEYFRDVEGQDVLLFIDNIFRFTQAGSEVSALLGRIPSAVGYQPTLATEMGQLQERITSTKKGSITSIQAVYVPADDYTDPAPATTFAYLDATTNLERSLVEQGIYPAVDPLESTSSALDPEIVGQEHYDVATRVQHILQRYRELQDIISVLGMDELSDEEKLIVARARRIQFFLSQNFFVAEVFTSVPGSYVPIKETIKGFKMILDGHLDDLPEDAFRGVGPIEDVLKKALKMGVTPSDPEAKALLEK.

153 to 160 (GGAGVGKT) provides a ligand contact to ATP.

Belongs to the ATPase alpha/beta chains family. In terms of assembly, F-type ATPases have 2 components, CF(1) - the catalytic core - and CF(0) - the membrane proton channel. CF(1) has five subunits: alpha(3), beta(3), gamma(1), delta(1), epsilon(1). CF(0) has three main subunits: a(1), b(2) and c(9-12). The alpha and beta chains form an alternating ring which encloses part of the gamma chain. CF(1) is attached to CF(0) by a central stalk formed by the gamma and epsilon chains, while a peripheral stalk is formed by the delta and b chains.

Its subcellular location is the cell membrane. The enzyme catalyses ATP + H2O + 4 H(+)(in) = ADP + phosphate + 5 H(+)(out). Produces ATP from ADP in the presence of a proton gradient across the membrane. The catalytic sites are hosted primarily by the beta subunits. The chain is ATP synthase subunit beta from Lactobacillus delbrueckii subsp. bulgaricus (strain ATCC BAA-365 / Lb-18).